The following is a 173-amino-acid chain: NADH-ubiquinone oxidoreductase chain 6 (173 aa).

5 helical membrane passes run 1–21 (MTYFVLFLSLCFVLGGLAVAS), 27–47 (YGVVGLVLASVVGCGWLLSLG), 48–68 (VSFVSLVLFMVYLGGMLVVFV), 91–111 (GVSFVGVLVMGLVIGGFIGCL), and 139–159 (CGVGMFLVAGWGLLLTLFVVL).

It belongs to the complex I subunit 6 family.

The protein localises to the mitochondrion membrane. The enzyme catalyses a ubiquinone + NADH + 5 H(+)(in) = a ubiquinol + NAD(+) + 4 H(+)(out). Its function is as follows. Core subunit of the mitochondrial membrane respiratory chain NADH dehydrogenase (Complex I) that is believed to belong to the minimal assembly required for catalysis. Complex I functions in the transfer of electrons from NADH to the respiratory chain. The immediate electron acceptor for the enzyme is believed to be ubiquinone. This Fratercula cirrhata (Tufted puffin) protein is NADH-ubiquinone oxidoreductase chain 6 (MT-ND6).